Consider the following 506-residue polypeptide: UBX domain-containing protein 4 (506 aa).

Residues M1–E199 form an interaction with UBQLN1 region. Topologically, residues M1 to T411 are cytoplasmic. The interval Q110 to L194 is disordered. Polar residues-rich tracts occupy residues S120–A136 and L153–A167. The UBX domain maps to D313 to L391. Residues L412–F432 lie within the membrane without spanning it. Topologically, residues S433–M506 are cytoplasmic. A disordered region spans residues P437 to M506. The span at A444–S456 shows a compositional bias: low complexity. Basic and acidic residues predominate over residues K457–D489. T487 carries the post-translational modification Phosphothreonine. A compositionally biased stretch (polar residues) spans N496 to M506.

In terms of assembly, directly interacts with VCP. Interacts with UBQLN1. Forms a complex with VCP and UBQLN1. As to expression, expressed in many tissues, including brain, heart, kidney, liver, muscle and spleen (at protein level).

Its subcellular location is the endoplasmic reticulum membrane. The protein resides in the nucleus envelope. Functionally, involved in endoplasmic reticulum-associated protein degradation (ERAD). Acts as a platform to recruit both UBQLN1 and VCP to the ER during ERAD. The chain is UBX domain-containing protein 4 (Ubxn4) from Mus musculus (Mouse).